A 471-amino-acid polypeptide reads, in one-letter code: MQQEATGGQKIRPIPIIASFLMAGFIGLFSETALNMALSDLIQVFDISSATVQWLTTGYLLTLGILVPISGLLLQWFTTRGLFFTAVSFSIAGTLIAALSPTFAMLMIGRVVQAVGTALLLPLMFNTILLIFPEHKRGSAMGMIGLVIMFAPAVGPTISGLILENLTWNWIFWISLPFLIIALLFGMKFMQNVSVVTKPKIDILSIILSTLGFGGVVFAFSSAGESGWGSATVLVSIIVGGIALGLFVWRQLTMEKPLMDLKVFKYPMFTLGLILVFISFMMILSTMILLPLYLQNSLALAAFSAGLVLLPGGVLNGLMSPFTGRLFDAYGPRALVIPGFIVAVVALFFLTRIEVGTSALTIIVLHSVLMIGISMVMMPAQTNGLNQLPPKLYPDGTAIMNTLQQVSGAIGTAVAITIMSAGQKAYMETAQGVGPEQMVASLTAGIQNAFVFGLIMACIGLLCSLFIRKAK.

12 helical membrane-spanning segments follow: residues 13–35 (PIPI…TALN), 55–77 (LTTG…LQWF), 84–106 (FTAV…FAML), 111–133 (VVQA…LIFP), 140–162 (AMGM…SGLI), 167–189 (TWNW…GMKF), 201–223 (IDIL…FSSA), 227–249 (GWGS…LFVW), 269–291 (FTLG…ILLP), 329–351 (AYGP…FFLT), 358–380 (SALT…MMPA), and 445–467 (GIQN…SLFI).

It belongs to the major facilitator superfamily. EmrB family.

The protein resides in the cell membrane. Its function is as follows. Proton-dependent transporter. May mediate the efflux of lincomycin. The sequence is that of Lincomycin resistance protein LmrB (lmrB) from Listeria monocytogenes serovar 1/2a (strain ATCC BAA-679 / EGD-e).